A 241-amino-acid polypeptide reads, in one-letter code: MNSGRPETMENLPALYTIFQGEVAMVTDYGAFIKIPGCRKQGLVHRTHMSSCRVDKPSEIVDVGDKVWVKLIGREMKNDRIKVSLSMKVVNQGTGKDLDPNNVIIEQEERRRRSFQDYTGQKITLEAVLNTTCKKCGCKGHFAKDCFMQPGGTKYSLIPDEEEEKEEAKSAEFEKPDPTRNPSRKRKKEKKKKKHRDRKSSDSDSSDSESDTGKRARHTSKDSKAAKKKKKKKKHKKKHKE.

Residues 16 to 88 enclose the S1 motif domain; sequence YTIFQGEVAM…DRIKVSLSMK (73 aa). Ser-114 bears the Phosphoserine mark. The CCHC-type zinc finger occupies 131–148; the sequence is TTCKKCGCKGHFAKDCFM. Lys-144 is modified (N6-acetyllysine). The tract at residues 161–241 is disordered; that stretch reads EEEEKEEAKS…KKKHKKKHKE (81 aa). Over residues 166–178 the composition is skewed to basic and acidic residues; it reads EEAKSAEFEKPDP. Residues 182–198 show a composition bias toward basic residues; that stretch reads PSRKRKKEKKKKKHRDR. Residue Ser-183 is modified to Phosphoserine. Positions 211 to 225 are enriched in basic and acidic residues; it reads DTGKRARHTSKDSKA. Over residues 226–241 the composition is skewed to basic residues; it reads AKKKKKKKKHKKKHKE.

As to quaternary structure, interacts with PNN. Associates with the 60S ribosomal subunit.

It is found in the nucleus. The protein resides in the nucleolus. The chain is Zinc finger CCHC domain-containing protein 17 (ZCCHC17) from Homo sapiens (Human).